The primary structure comprises 601 residues: 4-hydroxy-3-methylbut-2-en-1-yl diphosphate synthase (flavodoxin) (601 aa).

Residues cysteine 507, cysteine 510, cysteine 542, and glutamate 549 each contribute to the [4Fe-4S] cluster site.

It belongs to the IspG family. [4Fe-4S] cluster serves as cofactor.

It carries out the reaction (2E)-4-hydroxy-3-methylbut-2-enyl diphosphate + oxidized [flavodoxin] + H2O + 2 H(+) = 2-C-methyl-D-erythritol 2,4-cyclic diphosphate + reduced [flavodoxin]. It functions in the pathway isoprenoid biosynthesis; isopentenyl diphosphate biosynthesis via DXP pathway; isopentenyl diphosphate from 1-deoxy-D-xylulose 5-phosphate: step 5/6. In terms of biological role, converts 2C-methyl-D-erythritol 2,4-cyclodiphosphate (ME-2,4cPP) into 1-hydroxy-2-methyl-2-(E)-butenyl 4-diphosphate. The sequence is that of 4-hydroxy-3-methylbut-2-en-1-yl diphosphate synthase (flavodoxin) from Chlamydia muridarum (strain MoPn / Nigg).